The sequence spans 1023 residues: Cell division cycle-associated protein 2 (1023 aa).

The segment covering 1–14 has biased composition (basic and acidic residues); that stretch reads MDANSKDKPPETKE. Residues 1–21 are disordered; sequence MDANSKDKPPETKESAMNNAG. A phosphoserine mark is found at serine 98, serine 120, serine 126, serine 131, serine 210, serine 291, and serine 309. Position 312 is a phosphothreonine (threonine 312). The PP1-binding domain occupies 389-449; the sequence is KRKRVTFGED…PEPLPQPDFD (61 aa). Phosphoserine is present on residues serine 400 and serine 407. A Phosphothreonine modification is found at threonine 412. Residue serine 437 is modified to Phosphoserine. The segment at 542–580 is disordered; it reads SQETKCTKRALPKKSQVLKSCRKKKGKGKKSVQKSLYGE. Positions 561-573 are enriched in basic residues; the sequence is SCRKKKGKGKKSV. 2 positions are modified to phosphoserine: serine 591 and serine 614. The segment at 667–729 is disordered; the sequence is SSLGNATSDE…ERVASDSPKP (63 aa). Over residues 679-691 the composition is skewed to low complexity; the sequence is NTNIMNINENKNI. Basic and acidic residues predominate over residues 696–706; sequence NKSESENEPKA. Phosphoserine is present on residues serine 710 and serine 756. Residue lysine 762 forms a Glycyl lysine isopeptide (Lys-Gly) (interchain with G-Cter in SUMO2) linkage. The span at 803 to 816 shows a compositional bias: basic and acidic residues; that stretch reads ESKSQSEDLGRKPM. Disordered regions lie at residues 803–860 and 936–1023; these read ESKS…GSSV and SPIK…ERKQ. A phosphoserine mark is found at serine 936 and serine 977. Polar residues-rich tracts occupy residues 979–992 and 1000–1010; these read CIST…TSQF and SLNGKGESSLT. Serine 1000 carries the phosphoserine modification. The span at 1013–1023 shows a compositional bias: basic and acidic residues; the sequence is ERIEHNGERKQ.

As to quaternary structure, interacts with PPP1CC. Post-translationally, phosphorylated by CDK1. May regulate its subcellular location. Ubiquitously expressed.

It is found in the nucleus. In terms of biological role, regulator of chromosome structure during mitosis required for condensin-depleted chromosomes to retain their compact architecture through anaphase. Acts by mediating the recruitment of phopsphatase PP1-gamma subunit (PPP1CC) to chromatin at anaphase and into the following interphase. At anaphase onset, its association with chromatin targets a pool of PPP1CC to dephosphorylate substrates. This is Cell division cycle-associated protein 2 (CDCA2) from Homo sapiens (Human).